Here is a 366-residue protein sequence, read N- to C-terminus: Glutamate 5-kinase (366 aa).

Residue lysine 17 coordinates ATP. Substrate contacts are provided by serine 57, aspartate 144, and asparagine 156. ATP-binding positions include 176–177 (SD) and 216–222 (TGGMASK). Positions 278-352 (QGILHIDEGA…GKSTQELPAE (75 aa)) constitute a PUA domain.

Belongs to the glutamate 5-kinase family.

The protein localises to the cytoplasm. The enzyme catalyses L-glutamate + ATP = L-glutamyl 5-phosphate + ADP. It participates in amino-acid biosynthesis; L-proline biosynthesis; L-glutamate 5-semialdehyde from L-glutamate: step 1/2. Catalyzes the transfer of a phosphate group to glutamate to form L-glutamate 5-phosphate. This chain is Glutamate 5-kinase, found in Rhodococcus opacus (strain B4).